The following is a 220-amino-acid chain: Ribosomal RNA large subunit methyltransferase E (220 aa).

S-adenosyl-L-methionine contacts are provided by G60, W62, D92, D108, and D133. Catalysis depends on K173, which acts as the Proton acceptor. Residues 198 to 220 (KPKASRDKSSETFILGRQLKHPR) are disordered.

The protein belongs to the class I-like SAM-binding methyltransferase superfamily. RNA methyltransferase RlmE family.

The protein resides in the cytoplasm. It carries out the reaction uridine(2552) in 23S rRNA + S-adenosyl-L-methionine = 2'-O-methyluridine(2552) in 23S rRNA + S-adenosyl-L-homocysteine + H(+). Its function is as follows. Specifically methylates the uridine in position 2552 of 23S rRNA at the 2'-O position of the ribose in the fully assembled 50S ribosomal subunit. This chain is Ribosomal RNA large subunit methyltransferase E, found in Burkholderia cenocepacia (strain HI2424).